We begin with the raw amino-acid sequence, 402 residues long: Eukaryotic initiation factor 4A (402 aa).

A Q motif motif is present at residues 29–57 (ESFDDMELKEELLRGIYGFGFEKPSAIQK). A Helicase ATP-binding domain is found at 60–230 (IVPCTTGKDV…NRFMRNPIRI (171 aa)). 73 to 80 (AQSGTGKT) contributes to the ATP binding site. The short motif at 178–181 (DEAD) is the DEAD box element. The Helicase C-terminal domain occupies 241–402 (GIRQFYINVQ…EMPESIADLI (162 aa)).

It belongs to the DEAD box helicase family. eIF4A subfamily. In terms of assembly, eIF4F is a multi-subunit complex, the composition of which varies with external and internal environmental conditions. It is composed of at least EIF4A, EIF4E and EIF4G.

The catalysed reaction is ATP + H2O = ADP + phosphate + H(+). Its function is as follows. ATP-dependent RNA helicase which is a subunit of the eIF4F complex involved in cap recognition and is required for mRNA binding to ribosome. In the current model of translation initiation, eIF4A unwinds RNA secondary structures in the 5'-UTR of mRNAs which is necessary to allow efficient binding of the small ribosomal subunit, and subsequent scanning for the initiator codon. In Caenorhabditis elegans, this protein is Eukaryotic initiation factor 4A (inf-1).